Reading from the N-terminus, the 357-residue chain is Peptide chain release factor 1 (357 aa).

The residue at position 236 (Q236) is an N5-methylglutamine. Residues 283–309 (ERRKKDQERANNRREQIGSGDRSERIR) are compositionally biased toward basic and acidic residues. Residues 283–313 (ERRKKDQERANNRREQIGSGDRSERIRTYNF) are disordered.

Belongs to the prokaryotic/mitochondrial release factor family. In terms of processing, methylated by PrmC. Methylation increases the termination efficiency of RF1.

The protein resides in the cytoplasm. In terms of biological role, peptide chain release factor 1 directs the termination of translation in response to the peptide chain termination codons UAG and UAA. The chain is Peptide chain release factor 1 from Rickettsia bellii (strain OSU 85-389).